The primary structure comprises 568 residues: MTTNGILQILAFTAIIWALAKPIGGFMAKVFAGERTWLHRILRPVEVAIYKLCGVDEAAEQRWTGYAGSLLAFSLVSLLFTYLIQRVQQWLPLNPQGLANVAADLGWNTAASFTTNTNWQAYTPETTMSYITQMIALATHNFFSAAAGIAVAIAFVRGFSRHSANTLGNFWVDFTRATLYILLPMSLLAALFFCSQGVIQNLDPYTKVTTLEGAVQTIPQGPVASQEAIKMLGTNGGGFFNANSAHPYENPTPLANLAQMVLIFLIPAGLTYTFGKMIKDTRQGWALLAAMTVLFLAGVCVVYPAEQAGNPVITRLGVAGGNMEGKEVRFGIANSALFTVVTTDASCGAVNNVHDSLTPLGGLVPLVNIELGEVVFGGVGSGLYGMLLFAILAVFIAGLMVGRTPEYLGKKIEQKEVKMVMLSVLVLALCILGFSAAGIGQQTVANSMTNHGPHGLTEVLYGYTSAAGNNGSAFAGLSANTMYLNTTLGIAMLCGRFLMLIPLLAAAGSLAQKKLVPVSAGTFPTHGPLFVTLLVGVVVIVGALTFFPALSLGPIVEHFLMHQGRLWS.

The next 11 helical transmembrane spans lie at 6–26 (ILQI…IGGF), 64–84 (TGYA…TYLI), 135–155 (IALA…AIAF), 179–199 (LYIL…QGVI), 254–274 (LANL…TYTF), 285–305 (WALL…VYPA), 382–402 (GLYG…LMVG), 419–439 (MVML…AAGI), 459–481 (VLYG…SANT), 488–508 (LGIA…AAAG), and 529–549 (LFVT…FFPA).

It belongs to the KdpA family. As to quaternary structure, the system is composed of three essential subunits: KdpA, KdpB and KdpC.

The protein localises to the cell inner membrane. Functionally, part of the high-affinity ATP-driven potassium transport (or Kdp) system, which catalyzes the hydrolysis of ATP coupled with the electrogenic transport of potassium into the cytoplasm. This subunit binds the periplasmic potassium ions and delivers the ions to the membrane domain of KdpB through an intramembrane tunnel. In Solibacter usitatus (strain Ellin6076), this protein is Potassium-transporting ATPase potassium-binding subunit.